Here is a 256-residue protein sequence, read N- to C-terminus: Adenylate kinase (256 aa).

49-54 (GAGKGT) provides a ligand contact to ATP. Positions 69-98 (ATGDMLREQVQQKTPLGIEAKKIMDAGGLV) are NMP. Residues threonine 70, arginine 75, 96–98 (GLV), 125–128 (GFPR), and glutamine 132 contribute to the AMP site. An LID region spans residues 166–203 (GRLVHPASGRSYHKEFNPPKKRNVDDVTGEPLIQRSDD). ATP-binding positions include arginine 167 and 176 to 177 (SY). The AMP site is built by arginine 200 and arginine 211. Glutamine 239 is an ATP binding site.

The protein belongs to the adenylate kinase family. AK2 subfamily. As to quaternary structure, monomer.

It is found in the cytoplasm. The protein localises to the cytosol. It localises to the mitochondrion intermembrane space. It carries out the reaction AMP + ATP = 2 ADP. Functionally, catalyzes the reversible transfer of the terminal phosphate group between ATP and AMP. Plays an important role in cellular energy homeostasis and in adenine nucleotide metabolism. Adenylate kinase activity is critical for regulation of the phosphate utilization and the AMP de novo biosynthesis pathways. The chain is Adenylate kinase from Laccaria bicolor (strain S238N-H82 / ATCC MYA-4686) (Bicoloured deceiver).